A 282-amino-acid polypeptide reads, in one-letter code: 4-hydroxy-3-methylbut-2-enyl diphosphate reductase (282 aa).

Cys-14 contributes to the [4Fe-4S] cluster binding site. (2E)-4-hydroxy-3-methylbut-2-enyl diphosphate-binding residues include His-43 and His-78. 2 residues coordinate dimethylallyl diphosphate: His-43 and His-78. The isopentenyl diphosphate site is built by His-43 and His-78. Cys-100 contributes to the [4Fe-4S] cluster binding site. His-128 is a (2E)-4-hydroxy-3-methylbut-2-enyl diphosphate binding site. Position 128 (His-128) interacts with dimethylallyl diphosphate. His-128 is an isopentenyl diphosphate binding site. The Proton donor role is filled by Glu-130. A (2E)-4-hydroxy-3-methylbut-2-enyl diphosphate-binding site is contributed by Thr-164. Cys-192 is a [4Fe-4S] cluster binding site. (2E)-4-hydroxy-3-methylbut-2-enyl diphosphate contacts are provided by Ser-220, Ser-221, Asn-222, and Ser-266. Positions 220, 221, 222, and 266 each coordinate dimethylallyl diphosphate. Isopentenyl diphosphate contacts are provided by Ser-220, Ser-221, Asn-222, and Ser-266.

This sequence belongs to the IspH family. [4Fe-4S] cluster serves as cofactor.

The catalysed reaction is isopentenyl diphosphate + 2 oxidized [2Fe-2S]-[ferredoxin] + H2O = (2E)-4-hydroxy-3-methylbut-2-enyl diphosphate + 2 reduced [2Fe-2S]-[ferredoxin] + 2 H(+). The enzyme catalyses dimethylallyl diphosphate + 2 oxidized [2Fe-2S]-[ferredoxin] + H2O = (2E)-4-hydroxy-3-methylbut-2-enyl diphosphate + 2 reduced [2Fe-2S]-[ferredoxin] + 2 H(+). The protein operates within isoprenoid biosynthesis; dimethylallyl diphosphate biosynthesis; dimethylallyl diphosphate from (2E)-4-hydroxy-3-methylbutenyl diphosphate: step 1/1. It functions in the pathway isoprenoid biosynthesis; isopentenyl diphosphate biosynthesis via DXP pathway; isopentenyl diphosphate from 1-deoxy-D-xylulose 5-phosphate: step 6/6. Functionally, catalyzes the conversion of 1-hydroxy-2-methyl-2-(E)-butenyl 4-diphosphate (HMBPP) into a mixture of isopentenyl diphosphate (IPP) and dimethylallyl diphosphate (DMAPP). Acts in the terminal step of the DOXP/MEP pathway for isoprenoid precursor biosynthesis. This chain is 4-hydroxy-3-methylbut-2-enyl diphosphate reductase, found in Clostridium perfringens (strain SM101 / Type A).